Reading from the N-terminus, the 189-residue chain is UPF0301 protein bbp_491 (189 aa).

The protein belongs to the UPF0301 (AlgH) family.

This is UPF0301 protein bbp_491 from Buchnera aphidicola subsp. Baizongia pistaciae (strain Bp).